The following is a 551-amino-acid chain: Rhodopsin kinase grk7-a (551 aa).

Ser-36 is subject to Phosphoserine. The RGS domain occupies 57-174; sequence YQSICVEQPI…QNSPFYDRFL (118 aa). The region spanning 189–451 is the Protein kinase domain; sequence FYEFRILGKG…DDDPRKHAFF (263 aa). Residues 195-203 and Lys-218 each bind ATP; that span reads LGKGGFGEV. Asp-314 functions as the Proton acceptor in the catalytic mechanism. The region spanning 452-517 is the AGC-kinase C-terminal domain; the sequence is KSINFQRLEA…GAIPISWQKE (66 aa). Residue Ser-487 is modified to Phosphoserine. The tract at residues 529–551 is disordered; the sequence is DPSREATGGGGNSGEKSGVCSIL. Residues 542–551 are compositionally biased toward low complexity; it reads GEKSGVCSIL. The residue at position 548 (Cys-548) is a Cysteine methyl ester. The S-geranylgeranyl cysteine moiety is linked to residue Cys-548. The propeptide at 549–551 is removed in mature form; it reads SIL.

This sequence belongs to the protein kinase superfamily. AGC Ser/Thr protein kinase family. GPRK subfamily. Post-translationally, autophosphorylated in vitro at Ser-487. Phosphorylation at Ser-36 is regulated by light and activated by cAMP.

It localises to the membrane. The catalysed reaction is L-threonyl-[rhodopsin] + ATP = O-phospho-L-threonyl-[rhodopsin] + ADP + H(+). It carries out the reaction L-seryl-[rhodopsin] + ATP = O-phospho-L-seryl-[rhodopsin] + ADP + H(+). Retina-specific kinase involved in the shutoff of the photoresponse and adaptation to changing light conditions via cone opsin phosphorylation, including rhodopsin (RHO). The sequence is that of Rhodopsin kinase grk7-a (grk7-a) from Xenopus laevis (African clawed frog).